The chain runs to 309 residues: Calponin-2 (309 aa).

Ser-2 carries the post-translational modification N-acetylserine. Lys-8 and Lys-25 each carry N6-acetyllysine. A Calponin-homology (CH) domain is found at 28–132; the sequence is PQKEAELRSW…SLLALAGKAK (105 aa). At Ser-138 the chain carries Phosphoserine. Calponin-like repeat units follow at residues 166-191, 206-231, and 245-269; these read IGLQ…RHLY, ISLQ…RHIY, and MSLQ…RQIY. Positions 273–309 are disordered; it reads YCPQGPAADGAPAAAGDGPGPGEPSECPPYYQEEAGY. The span at 277 to 288 shows a compositional bias: low complexity; sequence GPAADGAPAAAG.

This sequence belongs to the calponin family.

Thin filament-associated protein that is implicated in the regulation and modulation of smooth muscle contraction. It is capable of binding to actin, calmodulin and tropomyosin. The interaction of calponin with actin inhibits the actomyosin Mg-ATPase activity. The protein is Calponin-2 (CNN2) of Bos taurus (Bovine).